Consider the following 387-residue polypeptide: Probable multidrug resistance protein EmrK (387 aa).

Over 1 to 16 (MEQINSNKKHSNRRKY) the chain is Cytoplasmic. The chain crosses the membrane as a helical span at residues 17–37 (FSLLAVVLFIAFSGAYAYWSM). Topologically, residues 38–387 (ELEDMISTDD…SNIISHNGQL (350 aa)) are periplasmic.

The protein belongs to the membrane fusion protein (MFP) (TC 8.A.1) family. Part of the tripartite efflux system EmrYK-TolC, which is composed of an inner membrane transporter, EmrY, a membrane fusion protein, EmrK, and an outer membrane component, TolC. The complex forms a large protein conduit and can translocate molecules across both the inner and outer membranes.

The protein localises to the cell inner membrane. In terms of biological role, part of the tripartite efflux system EmrYK-TolC, which confers resistance to various drugs. The polypeptide is Probable multidrug resistance protein EmrK (emrK) (Escherichia coli (strain K12)).